The chain runs to 314 residues: Acetaldehyde dehydrogenase 4 (314 aa).

NAD(+) is bound at residue 15-18 (SGNI). The active-site Acyl-thioester intermediate is the cysteine 133. Residues 164–172 (SAGPGTRAN) and asparagine 292 contribute to the NAD(+) site.

The protein belongs to the acetaldehyde dehydrogenase family.

The enzyme catalyses acetaldehyde + NAD(+) + CoA = acetyl-CoA + NADH + H(+). The polypeptide is Acetaldehyde dehydrogenase 4 (Burkholderia lata (strain ATCC 17760 / DSM 23089 / LMG 22485 / NCIMB 9086 / R18194 / 383)).